Consider the following 396-residue polypeptide: NADH-quinone oxidoreductase subunit D (396 aa).

It belongs to the complex I 49 kDa subunit family. In terms of assembly, NDH-1 is composed of 14 different subunits. Subunits NuoB, C, D, E, F, and G constitute the peripheral sector of the complex.

It is found in the cell inner membrane. It carries out the reaction a quinone + NADH + 5 H(+)(in) = a quinol + NAD(+) + 4 H(+)(out). NDH-1 shuttles electrons from NADH, via FMN and iron-sulfur (Fe-S) centers, to quinones in the respiratory chain. The immediate electron acceptor for the enzyme in this species is believed to be ubiquinone. Couples the redox reaction to proton translocation (for every two electrons transferred, four hydrogen ions are translocated across the cytoplasmic membrane), and thus conserves the redox energy in a proton gradient. This Bartonella tribocorum (strain CIP 105476 / IBS 506) protein is NADH-quinone oxidoreductase subunit D.